The chain runs to 305 residues: Mas-related G-protein coupled receptor member A7 (305 aa).

Residues 1 to 17 (MDETSPRSIDIESLIPN) are Extracellular-facing. A helical membrane pass occupies residues 18-38 (LMIIIFGLVGLTGNAIVLWLL). At 39-46 (GFCLHRNA) the chain is on the cytoplasmic side. Residues 47–67 (FLVYILNLALADFLFLLCHFI) traverse the membrane as a helical segment. At 68–81 (NSAMFLLKVPIPNG) the chain is on the extracellular side. Residues 82-102 (IFVYCFYTIKMVLYITGLSML) form a helical membrane-spanning segment. The Cytoplasmic segment spans residues 103-129 (SAISTERCLSVLCPIWYHCRRPEHTST). Residues 130–150 (VMCAVIWIFSVLICILKEYFC) traverse the membrane as a helical segment. Residues 151 to 167 (DFFGTKLGNYYVCQASN) are Extracellular-facing. A helical membrane pass occupies residues 168–188 (FFMGAYLMFLFVVLCLSTLAL). Residues 189–211 (LARLFCGAEKMKFTRLFVTIMLT) are Cytoplasmic-facing. A helical membrane pass occupies residues 212–232 (ILVFLLCGLPWGFFWFLLIWI). Topologically, residues 233–244 (KGGFSVLDYRLY) are extracellular. A helical transmembrane segment spans residues 245 to 265 (LASIVLTVVNSCANPIIYFFV). Topologically, residues 266 to 305 (GSFRHRLKHQTLKMVLQSALQDTPETHENMVEMSRIKAEQ) are cytoplasmic.

Belongs to the G-protein coupled receptor 1 family. Mas subfamily. Expressed in a subset of sensory neurons that includes nociceptors. Expressed in the subclass of non-peptidergic sensory neurons that are IB4(+) and VR1(-).

The protein localises to the cell membrane. Functionally, orphan receptor. May be a receptor for RFamide-family neuropeptides such as NPFF and NPAF, which are analgesic in vivo. May regulate nociceptor function and/or development, including the sensation or modulation of pain. This is Mas-related G-protein coupled receptor member A7 (Mrgpra7) from Mus musculus (Mouse).